We begin with the raw amino-acid sequence, 156 residues long: Small ribosomal subunit protein uS7 (156 aa).

It belongs to the universal ribosomal protein uS7 family. Part of the 30S ribosomal subunit. Contacts proteins S9 and S11.

One of the primary rRNA binding proteins, it binds directly to 16S rRNA where it nucleates assembly of the head domain of the 30S subunit. Is located at the subunit interface close to the decoding center, probably blocks exit of the E-site tRNA. The sequence is that of Small ribosomal subunit protein uS7 from Xanthobacter autotrophicus (strain ATCC BAA-1158 / Py2).